Here is a 61-residue protein sequence, read N- to C-terminus: Mu-diguetoxin-Dc1c (61 aa).

Disulfide bonds link cysteine 12–cysteine 25, cysteine 19–cysteine 39, and cysteine 24–cysteine 53.

Belongs to the neurotoxin 26 (DTX) family. Expressed by the venom gland.

The protein resides in the secreted. Functionally, acts by delaying the inactivation of presynaptic voltage-sensitive sodium channels (Nav). Acts against insects and causes a progressive spastic paralysis. This Diguetia canities (Desert bush spider) protein is Mu-diguetoxin-Dc1c.